A 258-amino-acid chain; its full sequence is Imidazole glycerol phosphate synthase subunit HisF (258 aa).

Active-site residues include Asp11 and Asp130.

It belongs to the HisA/HisF family. As to quaternary structure, heterodimer of HisH and HisF.

It is found in the cytoplasm. The catalysed reaction is 5-[(5-phospho-1-deoxy-D-ribulos-1-ylimino)methylamino]-1-(5-phospho-beta-D-ribosyl)imidazole-4-carboxamide + L-glutamine = D-erythro-1-(imidazol-4-yl)glycerol 3-phosphate + 5-amino-1-(5-phospho-beta-D-ribosyl)imidazole-4-carboxamide + L-glutamate + H(+). It functions in the pathway amino-acid biosynthesis; L-histidine biosynthesis; L-histidine from 5-phospho-alpha-D-ribose 1-diphosphate: step 5/9. Its function is as follows. IGPS catalyzes the conversion of PRFAR and glutamine to IGP, AICAR and glutamate. The HisF subunit catalyzes the cyclization activity that produces IGP and AICAR from PRFAR using the ammonia provided by the HisH subunit. The polypeptide is Imidazole glycerol phosphate synthase subunit HisF (Haemophilus influenzae (strain PittEE)).